A 369-amino-acid polypeptide reads, in one-letter code: Maltose/maltodextrin import ATP-binding protein MalK (369 aa).

In terms of domain architecture, ABC transporter spans 4–234; that stretch reads VTLRNVCKAY…PQNRFVAGFI (231 aa). 36 to 43 contacts ATP; sequence GPSGCGKS.

It belongs to the ABC transporter superfamily. Maltooligosaccharide importer (TC 3.A.1.1.1) family. The complex is composed of two ATP-binding proteins (MalK), two transmembrane proteins (MalG and MalK) and a solute-binding protein (MalE).

The protein localises to the cell inner membrane. It catalyses the reaction D-maltose(out) + ATP + H2O = D-maltose(in) + ADP + phosphate + H(+). In terms of biological role, part of the ABC transporter complex MalEFGK involved in maltose/maltodextrin import. Responsible for energy coupling to the transport system. The sequence is that of Maltose/maltodextrin import ATP-binding protein MalK from Photobacterium profundum (strain SS9).